The chain runs to 152 residues: Transcriptional regulator MraZ (152 aa).

SpoVT-AbrB domains are found at residues 5-52 (ASAI…PFDE) and 81-124 (AHEC…DETA).

The protein belongs to the MraZ family. Forms oligomers.

The protein localises to the cytoplasm. The protein resides in the nucleoid. The chain is Transcriptional regulator MraZ from Shewanella sediminis (strain HAW-EB3).